The chain runs to 593 residues: Multidrug resistance-like ATP-binding protein MdlB (593 aa).

The Cytoplasmic portion of the chain corresponds to 1-25; that stretch reads MRSFSQLWPTLKRLLAYGSPWRKPL. Residues 25 to 310 form the ABC transmembrane type-1 domain; that stretch reads LGIAVLMMWV…LTTQQAMLQQ (286 aa). Residues 26-46 traverse the membrane as a helical segment; the sequence is GIAVLMMWVAAAAEVSGPLLI. At 47-62 the chain is on the periplasmic side; that stretch reads SYFIDNMVAKNNLPLK. Residues 63–83 form a helical membrane-spanning segment; it reads VVAGLAAAYVGLQLFAAGLHY. Residues 84 to 140 lie on the Cytoplasmic side of the membrane; sequence AQSLLFNRAAVGVVQQLRTDVMDAALRQPLSEFDTQPVGQVISRVTNDTEVIRDLYV. Residues 141–161 form a helical membrane-spanning segment; the sequence is TVVATVLRSAALVGAMLVAMF. At 162–164 the chain is on the periplasmic side; that stretch reads SLD. Residues 165–185 form a helical membrane-spanning segment; that stretch reads WRMALVAIMIFPVVLVVMVIY. Residues 186–254 lie on the Cytoplasmic side of the membrane; that stretch reads QRYSTPIVRR…LRLDGFLLRP (69 aa). A helical membrane pass occupies residues 255-275; sequence LLSLFSSLILCGLLMLFGFSA. Topologically, residues 276-278 are periplasmic; it reads SGT. A helical transmembrane segment spans residues 279–299; that stretch reads IEVGVLYAFISYLGRLNEPLI. Over 300 to 593 the chain is Cytoplasmic; that stretch reads ELTTQQAMLQ…SVREEESLSA (294 aa). In terms of domain architecture, ABC transporter spans 341–574; it reads IEVDNVSFAY…QGRYWQMYQL (234 aa). 374–381 lines the ATP pocket; sequence GHTGSGKS.

The protein belongs to the ABC transporter superfamily. Drug exporter-2 (TC 3.A.1.117) family.

It localises to the cell inner membrane. The catalysed reaction is ATP + H2O + xenobioticSide 1 = ADP + phosphate + xenobioticSide 2.. The chain is Multidrug resistance-like ATP-binding protein MdlB (mdlB) from Escherichia coli O6:H1 (strain CFT073 / ATCC 700928 / UPEC).